We begin with the raw amino-acid sequence, 332 residues long: dTDP-3,4-didehydro-2,6-dideoxy-alpha-D-glucose 3-reductase (332 aa).

12–18 contributes to the NADP(+) binding site; that stretch reads CASFAWR. R19 contributes to the substrate binding site. Residues 37 to 38, Y58, L74, and H79 contribute to the NADP(+) site; that span reads SR. K97 acts as the Proton donor in catalysis. Residues R165 and D177 each contribute to the NADP(+) site. Positions 235 and 255 each coordinate substrate.

Belongs to the Gfo/Idh/MocA family. As to quaternary structure, monomer.

It catalyses the reaction dTDP-4-dehydro-2,6-dideoxy-alpha-D-glucose + NADP(+) = dTDP-3,4-didehydro-2,6-dideoxy-alpha-D-glucose + NADPH + H(+). Functionally, involved in the biosynthesis of forosamine ((4-dimethylamino)-2,3,4,6-tetradeoxy-alpha-D-threo-hexopyranose), a highly deoxygenated sugar component of several bioactive natural products such as the insecticidal spinosyns A and D. Catalyzes the reduction of the C-3 keto moiety of dTDP-3,4-diketo-2,6-dideoxy-alpha-D-glucose to yield dTDP-4-keto-2,6-dideoxy-alpha-D-glucose. NADPH is the better reductant, however NADH can also be used. This is dTDP-3,4-didehydro-2,6-dideoxy-alpha-D-glucose 3-reductase from Saccharopolyspora spinosa.